The sequence spans 162 residues: Deoxyuridine 5'-triphosphate nucleotidohydrolase (162 aa).

Serine 11 is modified (phosphoserine). Residues 83 to 85 (RSG), 97 to 103 (GVIDEDY), glycine 108, arginine 151, and 156 to 157 (FG) each bind dUTP.

It belongs to the dUTPase family. As to quaternary structure, homotrimer. Requires Mg(2+) as cofactor. In terms of processing, phosphorylated in vivo on Ser-11, a reaction that can be catalyzed in vitro by CDC2.

The protein resides in the nucleus. It carries out the reaction dUTP + H2O = dUMP + diphosphate + H(+). It functions in the pathway pyrimidine metabolism; dUMP biosynthesis; dUMP from dCTP (dUTP route): step 2/2. Catalyzes the cleavage of 2'-deoxyuridine 5'-triphosphate (dUTP) into 2'-deoxyuridine 5'-monophosphate (dUMP) and inorganic pyrophosphate and through its action efficiently prevents uracil misincorporation into DNA and at the same time provides dUMP, the substrate for de novo thymidylate biosynthesis. Inhibits peroxisome proliferator-activated receptor (PPAR) activity by binding of its N-terminal to PPAR, preventing the latter's dimerization with retinoid X receptor. Essential for embryonic development. The chain is Deoxyuridine 5'-triphosphate nucleotidohydrolase (Dut) from Mus musculus (Mouse).